The primary structure comprises 87 residues: Neutrophil antibiotic peptide NP-3A (87 aa).

Residues 1–19 (MRTLTLLTTLLLLALHTQA) form the signal peptide. Residues 20–58 (ESPQGSTKEAPDEEQDISVFFGGDKGTALQDAAVKAGVT) constitute a propeptide that is removed on maturation. Disulfide bonds link Cys59-Cys87, Cys61-Cys76, and Cys66-Cys86.

The protein belongs to the alpha-defensin family. In terms of tissue distribution, highest expression in bone marrow and to a much lesser extent in small intestine.

The protein resides in the secreted. Active in vitro against S.aureus, fungi, Gram-positive and Gram-negative bacteria and to a lesser extent against an enveloped virus. This Rattus norvegicus (Rat) protein is Neutrophil antibiotic peptide NP-3A.